We begin with the raw amino-acid sequence, 83 residues long: Small ribosomal subunit protein bS16 (83 aa).

The protein belongs to the bacterial ribosomal protein bS16 family.

The chain is Small ribosomal subunit protein bS16 from Herminiimonas arsenicoxydans.